We begin with the raw amino-acid sequence, 590 residues long: MNKKIKEKLALLPDQPGCYLMKDRQDTVIYVGKAKILKNRVRSYFSGSHDAKTQRLVSEIEDFEYIVTSSNIEALILEMNLIKKYDPKYNVMLKDDKSYPFIKITNERHPKLVVTRKVKKDKGRYFGPYPNVQAARETKKLLDRLYPLRKCAKLPDRVCLYYHLGQCLAPCVYDVSEETNRQLTEEITRFLKGGYNEVKKELEAKMLEASENLQFERAKEFRDQIAHIESTMEKQKMMLNDMVDRDVFAYSYDKGWMCVQVFFIRQGKLIERDVSMFPLYREADEEFLTFIGQFYSKNNHFLPKEILVPDSVDKDMIEELLDVNVRQPKRGAKKDLLLLAHKNAKLALKEKFSLIERDEERTIGAIEKLGKALDIYTPYRIEAFDNSNIQGTDPVSAMVVFLDGKPHKKEYRKYKIKTVEGPDDYGSMREVIRRRYTRVLKENLPLPDLILIDGGKGQVSAALDVLENELGLDVPVAGLVKDDKHRTSNLLIGDPLEIVQLERNSQEFYLLQRIQDEVHRFAISFHRQLRGKSAFQSVLDGIPGVGEQRKKLLLKHFGSVKKMKEASAEDIRKLGIPLKTAQLIEEALKK.

Positions 14 to 91 constitute a GIY-YIG domain; it reads DQPGCYLMKD…IKKYDPKYNV (78 aa). The 36-residue stretch at 196–231 folds into the UVR domain; sequence NEVKKELEAKMLEASENLQFERAKEFRDQIAHIEST.

It belongs to the UvrC family. In terms of assembly, interacts with UvrB in an incision complex.

Its subcellular location is the cytoplasm. Functionally, the UvrABC repair system catalyzes the recognition and processing of DNA lesions. UvrC both incises the 5' and 3' sides of the lesion. The N-terminal half is responsible for the 3' incision and the C-terminal half is responsible for the 5' incision. This is UvrABC system protein C from Bacillus licheniformis (strain ATCC 14580 / DSM 13 / JCM 2505 / CCUG 7422 / NBRC 12200 / NCIMB 9375 / NCTC 10341 / NRRL NRS-1264 / Gibson 46).